The sequence spans 202 residues: Regulator of G-protein signaling 16 (202 aa).

S-palmitoyl cysteine attachment occurs at residues C2 and C12. The RGS domain maps to 65-181; the sequence is SFDLLLSSKN…LKSPAYRDLA (117 aa). Y168 is modified (phosphotyrosine; by EGFR). Position 177 is a phosphotyrosine (Y177). The tract at residues 183-202 is disordered; that stretch reads QATAASASPSSSSPAEPLHT.

Interacts with GNAI1 and GNAQ. Interacts with GNAI3, GNAI3 and GNAO1. Palmitoylated on Cys-2 and/or Cys-12. Post-translationally, phosphorylated. Phosphorylation at Tyr-168 by EGFR enhances GTPase accelerating (GAP) activity toward GNAI1.

The protein resides in the membrane. Functionally, regulates G protein-coupled receptor signaling cascades. Inhibits signal transduction by increasing the GTPase activity of G protein alpha subunits, thereby driving them into their inactive GDP-bound form. Plays an important role in the phototransduction cascade by regulating the lifetime and effective concentration of activated transducin alpha. May regulate extra and intracellular mitogenic signals. The chain is Regulator of G-protein signaling 16 (RGS16) from Bos taurus (Bovine).